We begin with the raw amino-acid sequence, 351 residues long: Transaldolase (351 aa).

Lys-138 serves as the catalytic Schiff-base intermediate with substrate.

It belongs to the transaldolase family. Type 2 subfamily.

It localises to the cytoplasm. It carries out the reaction D-sedoheptulose 7-phosphate + D-glyceraldehyde 3-phosphate = D-erythrose 4-phosphate + beta-D-fructose 6-phosphate. It participates in carbohydrate degradation; pentose phosphate pathway; D-glyceraldehyde 3-phosphate and beta-D-fructose 6-phosphate from D-ribose 5-phosphate and D-xylulose 5-phosphate (non-oxidative stage): step 2/3. In terms of biological role, transaldolase is important for the balance of metabolites in the pentose-phosphate pathway. The chain is Transaldolase from Neisseria meningitidis serogroup C (strain 053442).